We begin with the raw amino-acid sequence, 62 residues long: Small ribosomal subunit protein uS14 (62 aa).

Residues Cys-25, Cys-28, Cys-41, and Cys-44 each contribute to the Zn(2+) site.

It belongs to the universal ribosomal protein uS14 family. Zinc-binding uS14 subfamily. As to quaternary structure, part of the 30S ribosomal subunit. Contacts proteins S3 and S10. Zn(2+) is required as a cofactor.

Functionally, binds 16S rRNA, required for the assembly of 30S particles and may also be responsible for determining the conformation of the 16S rRNA at the A site. This chain is Small ribosomal subunit protein uS14, found in Sulfurihydrogenibium sp. (strain YO3AOP1).